Reading from the N-terminus, the 552-residue chain is MRPIDDSSLTWDDGALVTVDQRGLPHEARPLRLRTADQIIDAIKTLAIRGAPAIGIAGAFAVVLATRAHTRDGIVDVAAVRAEADRIAAARPTAVNLAWAVDRVRPRIAEGADAVLAETLDMLAEDGRVNRAAATHAADLVQRLCGPRPLRVLTHCNTGRLATSAFGTAIGALRVLAERGAVEEVLVDETRPLLQGARLTTWELAEAGIPHRLTIDSAAAWAMATGLVDCVLVGADRVTARGDVANKIGTYAVALAAHRHGIPFVVVAPESTRDPATASWRDIVVEERAAEEVTAFAGSATAPVGTAAFNPAFDVTPADLVTAVVTEHGVVHGTVAAEPGARIAATARELYARGWMPGTAGNLSVRTGDTAVVTASGLAKGELSATDMVRVAIADSTPLPGQDRRPSAETTIHTAVYRATGAAAVVHVHSPFATALATRAGAADEVRVLRITDYELIKGLGGSDPTAIDLAIFPNWRDVPRIAADIERRLAEHPGAPPVLCIAGHGITTWGENLTQARDRAECLEAVCELVLRTGREHAFAPQTHVLEMGPT.

Residues 1-333 (MRPIDDSSLT…VVTEHGVVHG (333 aa)) are methylthioribose-1-phosphate isomerase activity. Substrate is bound by residues 49–51 (RGA), Arg91, and Gln195. Residue Asp236 is the Proton donor of the active site. 246 to 247 (NK) is a binding site for substrate. Residues 334-535 (TVAAEPGARI…AVCELVLRTG (202 aa)) are methylthioribulose-1-phosphate dehydratase activity. The Zn(2+) site is built by His427 and His429.

The protein in the N-terminal section; belongs to the eIF-2B alpha/beta/delta subunits family. MtnA subfamily. In the C-terminal section; belongs to the aldolase class II family. MtnB subfamily. Zn(2+) is required as a cofactor.

The enzyme catalyses 5-(methylsulfanyl)-alpha-D-ribose 1-phosphate = 5-(methylsulfanyl)-D-ribulose 1-phosphate. It catalyses the reaction 5-(methylsulfanyl)-D-ribulose 1-phosphate = 5-methylsulfanyl-2,3-dioxopentyl phosphate + H2O. It functions in the pathway amino-acid biosynthesis; L-methionine biosynthesis via salvage pathway; L-methionine from S-methyl-5-thio-alpha-D-ribose 1-phosphate: step 1/6. It participates in amino-acid biosynthesis; L-methionine biosynthesis via salvage pathway; L-methionine from S-methyl-5-thio-alpha-D-ribose 1-phosphate: step 2/6. Bifunctional protein that catalyzes the interconversion of methylthioribose-1-phosphate (MTR-1-P) into methylthioribulose-1-phosphate (MTRu-1-P), and the dehydration of methylthioribulose-1-phosphate (MTRu-1-P) into 2,3-diketo-5-methylthiopentyl-1-phosphate (DK-MTP-1-P). The chain is Probable bifunctional methylthioribose-1-phosphate isomerase/methylthioribulose-1-phosphate dehydratase (mtnAB) from Nocardia farcinica (strain IFM 10152).